The primary structure comprises 804 residues: DNA gyrase subunit B (804 aa).

Residues 431–546 (CEMYIVEGDS…NGCVYIAQPP (116 aa)) enclose the Toprim domain. Mg(2+) is bound by residues Glu437, Asp511, and Asp513.

This sequence belongs to the type II topoisomerase GyrB family. As to quaternary structure, heterotetramer, composed of two GyrA and two GyrB chains. In the heterotetramer, GyrA contains the active site tyrosine that forms a transient covalent intermediate with DNA, while GyrB binds cofactors and catalyzes ATP hydrolysis. The cofactor is Mg(2+). Mn(2+) serves as cofactor. Requires Ca(2+) as cofactor.

It is found in the cytoplasm. It carries out the reaction ATP-dependent breakage, passage and rejoining of double-stranded DNA.. In terms of biological role, a type II topoisomerase that negatively supercoils closed circular double-stranded (ds) DNA in an ATP-dependent manner to modulate DNA topology and maintain chromosomes in an underwound state. Negative supercoiling favors strand separation, and DNA replication, transcription, recombination and repair, all of which involve strand separation. Also able to catalyze the interconversion of other topological isomers of dsDNA rings, including catenanes and knotted rings. Type II topoisomerases break and join 2 DNA strands simultaneously in an ATP-dependent manner. This Chlamydia muridarum (strain MoPn / Nigg) protein is DNA gyrase subunit B.